The following is a 932-amino-acid chain: Isoleucine--tRNA ligase (932 aa).

A 'HIGH' region motif is present at residues 57–67; that stretch reads PYANGDIHIGT. Glutamate 559 serves as a coordination point for L-isoleucyl-5'-AMP. Residues 600–604 carry the 'KMSKS' region motif; that stretch reads KMSKS. Lysine 603 contacts ATP. Zn(2+) contacts are provided by cysteine 899, cysteine 902, cysteine 919, and cysteine 922.

Belongs to the class-I aminoacyl-tRNA synthetase family. IleS type 1 subfamily. In terms of assembly, monomer. Zn(2+) serves as cofactor.

The protein localises to the cytoplasm. It catalyses the reaction tRNA(Ile) + L-isoleucine + ATP = L-isoleucyl-tRNA(Ile) + AMP + diphosphate. Its function is as follows. Catalyzes the attachment of isoleucine to tRNA(Ile). As IleRS can inadvertently accommodate and process structurally similar amino acids such as valine, to avoid such errors it has two additional distinct tRNA(Ile)-dependent editing activities. One activity is designated as 'pretransfer' editing and involves the hydrolysis of activated Val-AMP. The other activity is designated 'posttransfer' editing and involves deacylation of mischarged Val-tRNA(Ile). The chain is Isoleucine--tRNA ligase from Caldanaerobacter subterraneus subsp. tengcongensis (strain DSM 15242 / JCM 11007 / NBRC 100824 / MB4) (Thermoanaerobacter tengcongensis).